The primary structure comprises 574 residues: Developmental and secondary metabolism regulator veA (574 aa).

Disordered stretches follow at residues 1–22 (MATRAPLAPPPNETEASVSRIT), 39–60 (ERARACGAGAKSSADRRPVDPP), 255–500 (RSSD…GAGK), and 513–540 (RSYEDSFGHDDRPLYNGMRPDTESYPRR). The Velvet domain maps to 25–230 (GKKLTYKLNV…AEQGCRVRIR (206 aa)). Positions 39–44 (ERARAC) match the Nuclear localization signal motif. Composition is skewed to pro residues over residues 314 to 323 (RPLPPAPGPA) and 330 to 341 (PAPPAPPAPPSH). Polar residues-rich tracts occupy residues 343 to 353 (PGYQSHLSFGS), 385 to 394 (HARNPSTSAE), 406 to 415 (RMSTERSSYP), and 448 to 458 (VAQSAAPRSQT). Positions 457–498 (QTPSSSLVPSLPPLKALSGDYPNNLSQSSSSTSQSPSHDLGA) are PEST. 2 stretches are compositionally biased toward low complexity: residues 459-474 (PSSSLVPSLPPLKALS) and 482-493 (SQSSSSTSQSPS). A compositionally biased stretch (basic and acidic residues) spans 513-525 (RSYEDSFGHDDRP).

It belongs to the velvet family. VeA subfamily. As to quaternary structure, component of the heterotrimeric velvet complex composed of laeA, veA and velB; VeA acting as a bridging protein between laeA and velB.

It localises to the nucleus. Its subcellular location is the cytoplasm. Component of the velvet transcription factor complex that controls sexual/asexual developmental ratio in response to light, promoting sexual development in the darkness while stimulating asexual sporulation under illumination. The velvet complex hat acts as a global regulator for secondary metabolite gene expression. Controls the expression of the cyclopiazonic acid, aflatrem, and aflatoxin gene clusters. Controls the expression of the sclerotium-specific pigment asparasone A gene cluster. Controls the expression of the aflavarin gene cluster. also controls the production of hydrolases and other extracellular proteins during growth on natural starch-based substrates. Regulates genes involved in the High Osmolarity Glycerol (HOG) signaling pathway. Required for the conidial and sclerotial density-dependent production. The polypeptide is Developmental and secondary metabolism regulator veA (Aspergillus flavus (strain ATCC 200026 / FGSC A1120 / IAM 13836 / NRRL 3357 / JCM 12722 / SRRC 167)).